Here is a 44-residue protein sequence, read N- to C-terminus: Cytochrome b559 subunit beta (44 aa).

A helical transmembrane segment spans residues 19–35; sequence WLSIHALAVPTIFFLGS. A heme-binding site is contributed by histidine 23.

This sequence belongs to the PsbE/PsbF family. In terms of assembly, heterodimer of an alpha subunit and a beta subunit. PSII is composed of 1 copy each of membrane proteins PsbA, PsbB, PsbC, PsbD, PsbE, PsbF, PsbH, PsbI, PsbJ, PsbK, PsbL, PsbM, PsbT, PsbX, PsbY, PsbZ, Psb30/Ycf12, at least 3 peripheral proteins of the oxygen-evolving complex and a large number of cofactors. It forms dimeric complexes. Requires heme b as cofactor.

It is found in the plastid. It localises to the chloroplast thylakoid membrane. This b-type cytochrome is tightly associated with the reaction center of photosystem II (PSII). PSII is a light-driven water:plastoquinone oxidoreductase that uses light energy to abstract electrons from H(2)O, generating O(2) and a proton gradient subsequently used for ATP formation. It consists of a core antenna complex that captures photons, and an electron transfer chain that converts photonic excitation into a charge separation. In Tetradesmus obliquus (Green alga), this protein is Cytochrome b559 subunit beta.